Here is a 202-residue protein sequence, read N- to C-terminus: Holliday junction branch migration complex subunit RuvA (202 aa).

A domain I region spans residues 1 to 64 (MIGRLRGTLA…EDAQLLYGFA (64 aa)). Positions 65 to 143 (SKRERDFFRE…AWEAVPSMFA (79 aa)) are domain II. The flexible linker stretch occupies residues 144 to 154 (LVPNQPDAPAP). Residues 154–202 (PVASAESDAVSALISLGYKPQEASKAVSAIKDKGLSSEDMIRRALKGMI) are domain III.

It belongs to the RuvA family. As to quaternary structure, homotetramer. Forms an RuvA(8)-RuvB(12)-Holliday junction (HJ) complex. HJ DNA is sandwiched between 2 RuvA tetramers; dsDNA enters through RuvA and exits via RuvB. An RuvB hexamer assembles on each DNA strand where it exits the tetramer. Each RuvB hexamer is contacted by two RuvA subunits (via domain III) on 2 adjacent RuvB subunits; this complex drives branch migration. In the full resolvosome a probable DNA-RuvA(4)-RuvB(12)-RuvC(2) complex forms which resolves the HJ.

Its subcellular location is the cytoplasm. In terms of biological role, the RuvA-RuvB-RuvC complex processes Holliday junction (HJ) DNA during genetic recombination and DNA repair, while the RuvA-RuvB complex plays an important role in the rescue of blocked DNA replication forks via replication fork reversal (RFR). RuvA specifically binds to HJ cruciform DNA, conferring on it an open structure. The RuvB hexamer acts as an ATP-dependent pump, pulling dsDNA into and through the RuvAB complex. HJ branch migration allows RuvC to scan DNA until it finds its consensus sequence, where it cleaves and resolves the cruciform DNA. In Pseudomonas fluorescens (strain ATCC BAA-477 / NRRL B-23932 / Pf-5), this protein is Holliday junction branch migration complex subunit RuvA.